The primary structure comprises 1526 residues: High affinity cGMP-specific 3',5'-cyclic phosphodiesterase 9A (1526 aa).

Over residues Met-1–Ser-43 the composition is skewed to low complexity. 3 disordered regions span residues Met-1 to Thr-48, Ser-266 to Ala-348, and Arg-393 to Cys-476. Basic and acidic residues-rich tracts occupy residues Arg-270 to Asp-282 and Glu-305 to Thr-314. Composition is skewed to low complexity over residues Ile-324–Ala-348 and Gln-401–Thr-440. Residues Pro-441–Pro-462 are compositionally biased toward polar residues. Residues Val-664–Gln-985 enclose the PDEase domain. Catalysis depends on His-740, which acts as the Proton donor. His-740–His-744 is a 3',5'-cyclic GMP binding site. Positions 744, 780, 781, and 890 each coordinate Zn(2+). The 3',5'-cyclic GMP site is built by Asp-781 and Asp-890. Asp-781 serves as a coordination point for Mg(2+). Disordered regions lie at residues Thr-986–Gly-1170, Thr-1265–Pro-1284, Ser-1314–Trp-1351, Arg-1372–Gly-1406, and Arg-1469–Gly-1496. Over residues Ala-993–Ser-1005 the composition is skewed to low complexity. The span at Asn-1033–Cys-1057 shows a compositional bias: gly residues. A compositionally biased stretch (polar residues) spans Val-1065 to Thr-1093. The segment covering Val-1125–Thr-1136 has biased composition (basic and acidic residues). Low complexity predominate over residues Ser-1139 to Ser-1148. The span at Ser-1314–Ser-1324 shows a compositional bias: low complexity. Residues Gly-1325 to Met-1340 are compositionally biased toward gly residues. Low complexity-rich tracts occupy residues Pro-1341–Ser-1350 and Ser-1375–Gly-1397. Residues Tyr-1470 to Ser-1486 are compositionally biased toward polar residues.

The protein belongs to the cyclic nucleotide phosphodiesterase family. PDE9 subfamily. Requires Zn(2+) as cofactor. Mg(2+) is required as a cofactor. Expressed in Malpighian tubules and adult fly head.

It catalyses the reaction 3',5'-cyclic GMP + H2O = GMP + H(+). It functions in the pathway purine metabolism; 3',5'-cyclic GMP degradation; GMP from 3',5'-cyclic GMP: step 1/1. Its function is as follows. Specifically hydrolyzes the second messenger cGMP, which is a key regulator of many important physiological processes. Highly specific: compared to other members of the cyclic nucleotide phosphodiesterase family, has the highest affinity and selectivity for cGMP. In Drosophila melanogaster (Fruit fly), this protein is High affinity cGMP-specific 3',5'-cyclic phosphodiesterase 9A.